The following is a 473-amino-acid chain: Aspartyl/glutamyl-tRNA(Asn/Gln) amidotransferase subunit B (473 aa).

The protein belongs to the GatB/GatE family. GatB subfamily. Heterotrimer of A, B and C subunits.

The enzyme catalyses L-glutamyl-tRNA(Gln) + L-glutamine + ATP + H2O = L-glutaminyl-tRNA(Gln) + L-glutamate + ADP + phosphate + H(+). The catalysed reaction is L-aspartyl-tRNA(Asn) + L-glutamine + ATP + H2O = L-asparaginyl-tRNA(Asn) + L-glutamate + ADP + phosphate + 2 H(+). In terms of biological role, allows the formation of correctly charged Asn-tRNA(Asn) or Gln-tRNA(Gln) through the transamidation of misacylated Asp-tRNA(Asn) or Glu-tRNA(Gln) in organisms which lack either or both of asparaginyl-tRNA or glutaminyl-tRNA synthetases. The reaction takes place in the presence of glutamine and ATP through an activated phospho-Asp-tRNA(Asn) or phospho-Glu-tRNA(Gln). The sequence is that of Aspartyl/glutamyl-tRNA(Asn/Gln) amidotransferase subunit B from Campylobacter hominis (strain ATCC BAA-381 / DSM 21671 / CCUG 45161 / LMG 19568 / NCTC 13146 / CH001A).